The chain runs to 477 residues: Calcium uptake protein 1, mitochondrial (477 aa).

The transit peptide at 1–33 directs the protein to the mitochondrion; it reads MFRLNALSALAELAVGSRWYHGTSQPTQTKRRL. The segment at 55–108 is disordered; the sequence is AHAESPPSVNSKKTDAGDKGKSKDTREVSSHEGSAADTAAEPYPEEKKKKRSGF. The segment covering 66 to 84 has biased composition (basic and acidic residues); the sequence is KKTDAGDKGKSKDTREVSS. The polybasic region stretch occupies residues 101–112; sequence KKKKRSGFRDRK. At serine 124 the chain carries Phosphoserine. Residues 128–131 form a k/R-ring region; that stretch reads KIFR. The 36-residue stretch at 220–255 folds into the EF-hand 1 domain; the sequence is TPQRNFEIAFKMFDLNGDGEVDMEEFEQVQSIIRSQ. Positions 233, 235, 237, 239, and 244 each coordinate Ca(2+). The tract at residues 261-265 is k/R-ring; sequence RHRDR. The 21-residue stretch at 356 to 376 folds into the EF-hand 2; degenerate domain; that stretch reads KDGKGLTFQEVENFFTFLKNI. The region spanning 410–445 is the EF-hand 3 domain; sequence LSDHVCDVVFALFDCDGNGELSNKEFVSIMKQRLMR. Ca(2+) contacts are provided by aspartate 423, aspartate 425, asparagine 427, glutamate 429, and glutamate 434. Position 457 is an asymmetric dimethylarginine (arginine 457). The C-helix region stretch occupies residues 457–467; it reads RLMQAMWKCAQ.

Belongs to the MICU1 family. MICU1 subfamily. In terms of assembly, heterodimer; disulfide-linked; heterodimerizes with MICU2 or MICU3. Homodimer; disulfide-linked. Component of the uniplex complex, composed of MCU, EMRE/SMDT1, MICU1 and MICU2 (or MICU3) in a 4:4:1:1 stoichiometry. The composition of calcium sensors within the uniplex complex can differ depending on tissues: a MICU1 homodimer can be present instead of the MICU1-MICU2 heterodimer in skeletal-muscle and kidney. MICU1 is recruited to the uniplex complex by EMRE/SMDT1, and it associates with MCU at low calcium levels, occluding the pore of the MCU channel. Associates with the MICOS complex. Interacts with SLC25A23. Interacts with CHCHD4/MIA40; which introduces the interchain disulfide bond with MICU2. Interacts (when methylated) with UCP2; leading to decrease the calcium sensitivity of MICU1. Post-translationally, phosphorylation at Ser-124 by AKT1 impairs its maturation and stability. Asymmetric dimethylation at Arg-457 by PRMT1 decreases the calcium sensitivity of MICU1 by promoting interaction with UCP2. In terms of processing, degraded by YME1L1 when not complexed as homodimer or heterodimer. Not degraded when complexed as homodimer or heterodimer; the presence of the interchain disulfide bond protecting MICU1 from degradation by YME1L1.

It localises to the mitochondrion intermembrane space. The protein resides in the mitochondrion inner membrane. Calcium sensor of the mitochondrial calcium uniporter (MCU) channel, which senses calcium level via its EF-hand domains. MICU1 and MICU2 (or MICU3) form a disulfide-linked heterodimer that stimulates and inhibits MCU activity, depending on the concentration of calcium. At low calcium levels, MICU1 occludes the pore of the MCU channel, preventing mitochondrial calcium uptake. At higher calcium levels, calcium-binding to MICU1 and MICU2 (or MICU3) induces a conformational change that weakens MCU-MICU1 interactions and moves the MICU1-MICU2 heterodimer away from the pore, allowing calcium permeation through the MCU channel. Also required to protect against manganese toxicity by preventing manganese uptake by MCU: mechanistically, manganese-binding to its EF-hand domains does not induce any conformational change, maintaining MCU pore occlusion. Acts as a regulator of mitochondrial cristae structure independently of its ability to regulate the mitochondrial calcium uniporter channel. Regulates glucose-dependent insulin secretion in pancreatic beta-cells by regulating mitochondrial calcium uptake. Induces T-helper 1-mediated autoreactivity, which is accompanied by the release of IFNG. This is Calcium uptake protein 1, mitochondrial (Micu1) from Rattus norvegicus (Rat).